The primary structure comprises 424 residues: MRRNPSTFKYIPLRIDFMSEVPLPEVNIGLVGHVDHGKTTLVAALSGVWTDRHSEELKRGISIKLGYADATFRKCPECEPPEAYTVEEICPIHGVETEILRTVSFVDSPGHEMLMATMLSGAAIMDGAVLVIAANEKCPRPQTKEHLMALQIIGIDKIVIAQNKIDIVSRERVLENYQEIKEFVKGTVAENAPIIPISAQQKVNMDALIEAIEETIPTPERDLDSPPLMHVARSFDVNKPGTPPEKLLGGVLGGSLSRGRIRVGDEIEIRPGVKDERGNWNPLFTEVQSIVASGRFVDEATPGGLVGIATKLDPTLTKSDALVGNVVGHPGNLPDVLTSFTMEVNLLERVVGLDEEMEVEKIKMNEPLMLAVGTAITLGVVTSARDDIVEVKLRRPVCADKGSRVAISRRVGSRWRLIGAGIIR.

One can recognise a tr-type G domain in the interval 23 to 220 (LPEVNIGLVG…AIEETIPTPE (198 aa)). Positions 32–39 (GHVDHGKT) are G1. Residues D35, T39, G60, and S62 each contribute to the Mg(2+) site. Residue 35-40 (DHGKTT) participates in GTP binding. The interval 60-64 (GISIK) is G2. A G3 region spans residues 107–110 (DSPG). GTP-binding positions include 163-166 (NKID) and 198-200 (SAQ). The tract at residues 163 to 166 (NKID) is G4. Residues 198-200 (SAQ) are G5.

The protein belongs to the TRAFAC class translation factor GTPase superfamily. Classic translation factor GTPase family. EIF2G subfamily. Heterotrimer composed of an alpha, a beta and a gamma chain. Mg(2+) serves as cofactor.

It catalyses the reaction GTP + H2O = GDP + phosphate + H(+). In terms of biological role, eIF-2 functions in the early steps of protein synthesis by forming a ternary complex with GTP and initiator tRNA. This chain is Translation initiation factor 2 subunit gamma, found in Archaeoglobus fulgidus (strain ATCC 49558 / DSM 4304 / JCM 9628 / NBRC 100126 / VC-16).